Reading from the N-terminus, the 98-residue chain is Small ribosomal subunit protein uS19 (98 aa).

Belongs to the universal ribosomal protein uS19 family.

Functionally, protein S19 forms a complex with S13 that binds strongly to the 16S ribosomal RNA. The sequence is that of Small ribosomal subunit protein uS19 from Chlorobaculum tepidum (strain ATCC 49652 / DSM 12025 / NBRC 103806 / TLS) (Chlorobium tepidum).